A 29-amino-acid chain; its full sequence is Varv peptide D (29 aa).

A cross-link (cyclopeptide (Gly-Asn)) is located at residues 1 to 29 (GLPICGETCVGGSCNTPGCSCSWPVCTRN). 3 disulfides stabilise this stretch: Cys5-Cys19, Cys9-Cys21, and Cys14-Cys26.

In terms of processing, this is a cyclic peptide.

Functionally, probably participates in a plant defense mechanism. This Viola arvensis (European field pansy) protein is Varv peptide D.